Consider the following 87-residue polypeptide: MIIWPSYIDKKKSRREGRKVPEELAIEKPSLKDIEKALKKLGLEPKIYRDKRYPRQHWEICGCVEVDYKGNKLQLLKEICKIIKGKN.

This sequence belongs to the SRP19 family. Part of the signal recognition particle protein translocation system, which is composed of SRP and FtsY. Archaeal SRP consists of a 7S RNA molecule of 300 nucleotides and two protein subunits: SRP54 and SRP19.

Its subcellular location is the cytoplasm. Involved in targeting and insertion of nascent membrane proteins into the cytoplasmic membrane. Binds directly to 7S RNA and mediates binding of the 54 kDa subunit of the SRP. The chain is Signal recognition particle 19 kDa protein from Methanocaldococcus jannaschii (strain ATCC 43067 / DSM 2661 / JAL-1 / JCM 10045 / NBRC 100440) (Methanococcus jannaschii).